A 440-amino-acid chain; its full sequence is Xaa-Pro dipeptidase (440 aa).

Asp-241, Asp-252, His-333, Glu-378, and Glu-417 together coordinate Mn(2+).

This sequence belongs to the peptidase M24B family. Bacterial-type prolidase subfamily. Requires Mn(2+) as cofactor.

It carries out the reaction Xaa-L-Pro dipeptide + H2O = an L-alpha-amino acid + L-proline. Splits dipeptides with a prolyl residue in the C-terminal position. This Glaesserella parasuis serovar 5 (strain SH0165) (Haemophilus parasuis) protein is Xaa-Pro dipeptidase.